Reading from the N-terminus, the 313-residue chain is Beta-lactamase (313 aa).

The signal sequence occupies residues 1–15; it reads MQRIGVTDYTILGTV. The active-site Acyl-ester intermediate is the Ser190.

The protein belongs to the class-C beta-lactamase family.

The catalysed reaction is a beta-lactam + H2O = a substituted beta-amino acid. In terms of biological role, upon expression in E.coli enables the latter to utilize penicillin as a carbon source. This chain is Beta-lactamase (penA), found in Burkholderia multivorans (strain ATCC 17616 / 249).